We begin with the raw amino-acid sequence, 101 residues long: Small ribosomal subunit protein uS14 (101 aa).

Belongs to the universal ribosomal protein uS14 family. In terms of assembly, part of the 30S ribosomal subunit. Contacts proteins S3 and S10.

Functionally, binds 16S rRNA, required for the assembly of 30S particles and may also be responsible for determining the conformation of the 16S rRNA at the A site. In Stenotrophomonas maltophilia (strain K279a), this protein is Small ribosomal subunit protein uS14.